The chain runs to 561 residues: Nucleoprotein (561 aa).

Residues 52 to 237 form a binding site for the cap structure m7GTP region; that stretch reads VRKDKRTDSD…ISHEPSALNI (186 aa). The disordered stretch occupies residues 336–355; the sequence is SKPSAIQPPVRNGGSPDLKQ. Aspartate 380 and glutamate 382 together coordinate Mn(2+). 4 residues coordinate Zn(2+): glutamate 390, cysteine 497, histidine 500, and cysteine 521. Aspartate 525 is a Mn(2+) binding site.

Belongs to the arenaviridae nucleocapsid protein family. As to quaternary structure, homomultimerizes to form the nucleocapsid. Binds to viral genomic RNA. Interacts with glycoprotein G2. Interacts with protein Z; this interaction probably directs the encapsidated genome to budding sites. Interacts with protein L; this interaction does not interfere with Z-L interaction. Interacts with host IKBKE (via Protein kinase domain); the interaction inhibits IKBKE kinase activity.

It localises to the virion. The protein localises to the host cytoplasm. In terms of biological role, encapsidates the genome, protecting it from nucleases. The encapsidated genomic RNA is termed the nucleocapsid (NC). Serves as template for viral transcription and replication. The increased presence of protein N in host cell does not seem to trigger the switch from transcription to replication as observed in other negative strain RNA viruses. Through the interaction with host IKBKE, strongly inhibits the phosphorylation and nuclear translocation of host IRF3, a protein involved in interferon activation pathway, leading to the inhibition of interferon-beta and IRF3-dependent promoters activation. Also encodes a functional 3'-5' exoribonuclease that degrades preferentially dsRNA substrates and thereby participates in the suppression of interferon induction. This chain is Nucleoprotein, found in Cavia cutleri (Guinea pig).